Consider the following 858-residue polypeptide: Leucine--tRNA ligase (858 aa).

A 'HIGH' region motif is present at residues 42 to 52 (PYPSGRLHMGH). Positions 618–622 (KMSKS) match the 'KMSKS' region motif. An ATP-binding site is contributed by K621.

The protein belongs to the class-I aminoacyl-tRNA synthetase family.

The protein localises to the cytoplasm. It catalyses the reaction tRNA(Leu) + L-leucine + ATP = L-leucyl-tRNA(Leu) + AMP + diphosphate. The protein is Leucine--tRNA ligase of Vibrio cholerae serotype O1 (strain ATCC 39315 / El Tor Inaba N16961).